A 634-amino-acid chain; its full sequence is Chaperone protein DnaK (634 aa).

T197 is modified (phosphothreonine; by autocatalysis). Over residues 515–528 (LHKEDDKKRKESVD) the composition is skewed to basic and acidic residues. Disordered regions lie at residues 515–536 (LHKE…ADAI) and 595–634 (YKAA…AEVE). Over residues 603–615 (NAGGTAGGNGNAG) the composition is skewed to gly residues.

This sequence belongs to the heat shock protein 70 family.

In terms of biological role, acts as a chaperone. The polypeptide is Chaperone protein DnaK (Campylobacter hominis (strain ATCC BAA-381 / DSM 21671 / CCUG 45161 / LMG 19568 / NCTC 13146 / CH001A)).